Here is a 71-residue protein sequence, read N- to C-terminus: uncharacterized protein (71 aa).

2 consecutive transmembrane segments (helical) span residues 9 to 29 (FVIFSLFFTFISVSTFGNINF) and 41 to 61 (FVALFYIFTHTSFTSLCFFGL).

Its subcellular location is the membrane. This is an uncharacterized protein from Acheta domesticus (House cricket).